A 186-amino-acid polypeptide reads, in one-letter code: Nucleoside triphosphate pyrophosphatase (186 aa).

Asp-68 acts as the Proton acceptor in catalysis.

Belongs to the Maf family. Requires a divalent metal cation as cofactor.

It is found in the cytoplasm. The catalysed reaction is a ribonucleoside 5'-triphosphate + H2O = a ribonucleoside 5'-phosphate + diphosphate + H(+). It catalyses the reaction a 2'-deoxyribonucleoside 5'-triphosphate + H2O = a 2'-deoxyribonucleoside 5'-phosphate + diphosphate + H(+). Functionally, nucleoside triphosphate pyrophosphatase. May have a dual role in cell division arrest and in preventing the incorporation of modified nucleotides into cellular nucleic acids. The polypeptide is Nucleoside triphosphate pyrophosphatase (Prochlorococcus marinus (strain MIT 9303)).